The following is a 420-amino-acid chain: Probable ABC transporter-binding protein DR_1438 (420 aa).

Positions 1-24 are cleaved as a signal peptide; sequence MKKFAAVLGLTVAFAAASQAHAVT.

Belongs to the bacterial solute-binding protein 1 family.

Functionally, probably part of a binding-protein-dependent transport system. In Deinococcus radiodurans (strain ATCC 13939 / DSM 20539 / JCM 16871 / CCUG 27074 / LMG 4051 / NBRC 15346 / NCIMB 9279 / VKM B-1422 / R1), this protein is Probable ABC transporter-binding protein DR_1438.